We begin with the raw amino-acid sequence, 83 residues long: uncharacterized protein (83 aa).

The helical transmembrane segment at 50–70 (IMVFLGEAWIILIPFAIFCII) threads the bilayer.

The protein belongs to the plectrovirus ORF7 family.

Its subcellular location is the host membrane. This is an uncharacterized protein from Spiroplasma citri (SpV1).